A 232-amino-acid chain; its full sequence is MSRFTFKQFHINQDSCAMKVSTDGILLGAWADVKHCKNILDMGSGTGLLALMLAQRTEENCQIQAVELDPIAVKQAQENINDSVWKNRIQLIQTDIQHFLQTTAQTFDLIVANPPYFEQGIACKNEERELARYTKQSHLNWLEWAATRLSENGRISFVLPYEAGKTLIKSTALFCIKQTNVITKIGKTPQRMLLTFAKQPQVLMQDQLVIYDADNQYTEAFIKLTKDFYLKF.

The protein belongs to the methyltransferase superfamily. tRNA (adenine-N(6)-)-methyltransferase family.

Its subcellular location is the cytoplasm. The enzyme catalyses adenosine(37) in tRNA1(Val) + S-adenosyl-L-methionine = N(6)-methyladenosine(37) in tRNA1(Val) + S-adenosyl-L-homocysteine + H(+). Its function is as follows. Specifically methylates the adenine in position 37 of tRNA(1)(Val) (anticodon cmo5UAC). The sequence is that of tRNA1(Val) (adenine(37)-N6)-methyltransferase from Haemophilus influenzae (strain PittGG).